We begin with the raw amino-acid sequence, 153 residues long: Troponin C (153 aa).

EF-hand domains follow at residues 9–44 (EQVQ…LGQT), 45–80 (FEEN…FLVE), 85–120 (AMQE…LDDK), and 121–153 (LTED…MTGD). Residues Asp58, Asp60, Ser62, Glu64, and Glu69 each coordinate Ca(2+). Residues Asp134, Asp136, Ser138, Thr140, and Glu145 each contribute to the Ca(2+) site.

Belongs to the troponin C family.

Troponin is the central regulatory protein of striated muscle contraction. Tn consists of three components: Tn-I which is the inhibitor of actomyosin ATPase, Tn-T which contains the binding site for tropomyosin and Tn-C. The binding of calcium to Tn-C abolishes the inhibitory action of Tn on actin filaments. In Tyrophagus putrescentiae (Mold mite), this protein is Troponin C.